We begin with the raw amino-acid sequence, 247 residues long: Mast cell protease 2 (247 aa).

The N-terminal stretch at 1–19 is a signal peptide; it reads MHLLALHLLLFLLGSRAKA. The propeptide at 20–21 is activation peptide; it reads GE. Positions 22–245 constitute a Peptidase S1 domain; the sequence is IIGGTECKPH…YRPWINKILR (224 aa). A disulfide bridge connects residues C51 and C67. H66 functions as the Charge relay system in the catalytic mechanism. An N-linked (GlcNAc...) asparagine glycan is attached at N80. Residue D110 is the Charge relay system of the active site. Cystine bridges form between C144-C209 and C175-C188. Residue S203 is the Charge relay system of the active site.

Belongs to the peptidase S1 family. Granzyme subfamily.

The polypeptide is Mast cell protease 2 (Meriones unguiculatus (Mongolian jird)).